We begin with the raw amino-acid sequence, 291 residues long: Formamidopyrimidine-DNA glycosylase (291 aa).

Pro2 (schiff-base intermediate with DNA) is an active-site residue. The Proton donor role is filled by Glu3. Catalysis depends on Lys58, which acts as the Proton donor; for beta-elimination activity. His104, Arg123, and Lys166 together coordinate DNA. The FPG-type zinc-finger motif lies at 257 to 291 (KVYDREGKPCPTCGGTVQRFVQNGRSTFWCPKCQK). Residue Arg281 is the Proton donor; for delta-elimination activity of the active site.

The protein belongs to the FPG family. In terms of assembly, monomer. Zn(2+) is required as a cofactor.

The catalysed reaction is Hydrolysis of DNA containing ring-opened 7-methylguanine residues, releasing 2,6-diamino-4-hydroxy-5-(N-methyl)formamidopyrimidine.. It carries out the reaction 2'-deoxyribonucleotide-(2'-deoxyribose 5'-phosphate)-2'-deoxyribonucleotide-DNA = a 3'-end 2'-deoxyribonucleotide-(2,3-dehydro-2,3-deoxyribose 5'-phosphate)-DNA + a 5'-end 5'-phospho-2'-deoxyribonucleoside-DNA + H(+). Its function is as follows. Involved in base excision repair of DNA damaged by oxidation or by mutagenic agents. Acts as a DNA glycosylase that recognizes and removes damaged bases. Has a preference for oxidized purines, such as 7,8-dihydro-8-oxoguanine (8-oxoG). Has AP (apurinic/apyrimidinic) lyase activity and introduces nicks in the DNA strand. Cleaves the DNA backbone by beta-delta elimination to generate a single-strand break at the site of the removed base with both 3'- and 5'-phosphates. The chain is Formamidopyrimidine-DNA glycosylase from Rhodopseudomonas palustris (strain TIE-1).